A 398-amino-acid chain; its full sequence is Cation channel sperm-associated protein 3 (398 aa).

Topologically, residues 1–48 (MSQHRHQRHSRVISSSPVDTTSVGFCPTFKKFKRNDDECRAFVKRVIM) are cytoplasmic. The chain crosses the membrane as a helical span at residues 49-71 (SRFFKIIMISTVTSNAFFMALWT). Residues 72–80 (SYDIRYRLF) lie on the Extracellular side of the membrane. Residues 81 to 107 (RLLEFSEIFFVSICTSELSMKVYVDPI) form a helical membrane-spanning segment. Residue Asn108 is a topological domain, cytoplasmic. Residues 109-131 (YWKNGYNLLDVIIIIVMFLPYAL) traverse the membrane as a helical segment. Residues 132-143 (RQLMGKQFTYLY) are Extracellular-facing. The helical transmembrane segment at 144–160 (IADGMQSLRILKLIGYS) threads the bilayer. Residues 161 to 168 (QGIRTLIT) are Cytoplasmic-facing. A helical transmembrane segment spans residues 169 to 195 (AVGQTVYTVASVLLLLFLLMYIFAILG). Residues 196–216 (FCLFGSPDNGDHDNWGNLAAA) lie on the Extracellular side of the membrane. The helical; Pore-forming intramembrane region spans 217–236 (FFTLFSLATVDGWTDLQKQL). Over 237–242 (DNREFA) the chain is Extracellular. The helical transmembrane segment at 243 to 268 (LSRAFTIIFILLASFIFLNMFVGVMI) threads the bilayer. Topologically, residues 269-398 (MHTEDSIRKF…PQSLEKVDEK (130 aa)) are cytoplasmic.

The protein belongs to the cation channel sperm-associated (TC 1.A.1.19) family. Component of the CatSper complex or CatSpermasome composed of the core pore-forming members CATSPER1, CATSPER2, CATSPER3 and CATSPER4 as well as auxiliary members CATSPERB, CATSPERG, CATSPERD, CATSPERE, CATSPERZ, C2CD6/CATSPERT, TMEM249, TMEM262 and EFCAB9. HSPA1 may be an additional auxiliary complex member. The core complex members CATSPER1, CATSPER2, CATSPER3 and CATSPER4 form a heterotetrameric channel. The auxiliary CATSPERB, CATSPERG, CATSPERD and CATSPERE subunits form a pavilion-like structure over the pore which stabilizes the complex through interactions with CATSPER4, CATSPER3, CATSPER1 and CATSPER2 respectively. TMEM262/CATSPERH interacts with CATSPERB, further stabilizing the complex. C2CD6/CATSPERT interacts at least with CATSPERD and is required for targeting the CatSper complex in the flagellar membrane. In terms of tissue distribution, testis-specific.

Its subcellular location is the cell projection. The protein localises to the cilium. It localises to the flagellum membrane. It carries out the reaction Ca(2+)(in) = Ca(2+)(out). The CatSper calcium channel is indirectly activated by extracellular progesterone and prostaglandins following the sequence: progesterone &gt; PGF1-alpha = PGE1 &gt; PGA1 &gt; PGE2 &gt;&gt; PGD2. The CatSper calcium channel is directly inhibited by endocannabinoid 2-arachidonoylglycerol (2AG). Indirect activation by progesterone takes place via the following mechanism: progesterone binds and activates the acylglycerol lipase ABHD2, which in turn mediates hydrolysis of 2AG inhibitor, relieving inhibition of the CatSper channel. The primary effect of progesterone activation is to shift voltage dependence towards more physiological, negative membrane potentials; it is not mediated by metabotropic receptors and second messengers. Sperm capacitation enhances the effect of progesterone by providing additional negative shift. Also activated by the elevation of intracellular pH. Functionally, pore-forming subunit of the CatSper complex, a sperm-specific voltage-gated calcium channel that plays a central role in calcium-dependent physiological responses essential for successful fertilization, such as sperm hyperactivation, acrosome reaction and chemotaxis towards the oocyte. The polypeptide is Cation channel sperm-associated protein 3 (CATSPER3) (Homo sapiens (Human)).